The primary structure comprises 152 residues: Transcriptional regulator MraZ (152 aa).

2 SpoVT-AbrB domains span residues 5–52 and 81–124; these read ASAI…PIHE and AHEC…DEAA.

The protein belongs to the MraZ family. As to quaternary structure, forms oligomers.

Its subcellular location is the cytoplasm. It is found in the nucleoid. The chain is Transcriptional regulator MraZ from Shewanella pealeana (strain ATCC 700345 / ANG-SQ1).